The primary structure comprises 346 residues: Phenylalanine--tRNA ligase alpha subunit (346 aa).

Residue E264 coordinates Mg(2+).

The protein belongs to the class-II aminoacyl-tRNA synthetase family. Phe-tRNA synthetase alpha subunit type 1 subfamily. As to quaternary structure, tetramer of two alpha and two beta subunits. Requires Mg(2+) as cofactor.

Its subcellular location is the cytoplasm. It carries out the reaction tRNA(Phe) + L-phenylalanine + ATP = L-phenylalanyl-tRNA(Phe) + AMP + diphosphate + H(+). The protein is Phenylalanine--tRNA ligase alpha subunit of Leifsonia xyli subsp. xyli (strain CTCB07).